Reading from the N-terminus, the 224-residue chain is 7-cyano-7-deazaguanine synthase (224 aa).

Residue 10–20 coordinates ATP; it reads LSGGLDSATVA. Zn(2+)-binding residues include cysteine 189, cysteine 199, cysteine 202, and cysteine 205.

Belongs to the QueC family. Zn(2+) serves as cofactor.

It carries out the reaction 7-carboxy-7-deazaguanine + NH4(+) + ATP = 7-cyano-7-deazaguanine + ADP + phosphate + H2O + H(+). It functions in the pathway purine metabolism; 7-cyano-7-deazaguanine biosynthesis. Its function is as follows. Catalyzes the ATP-dependent conversion of 7-carboxy-7-deazaguanine (CDG) to 7-cyano-7-deazaguanine (preQ(0)). The sequence is that of 7-cyano-7-deazaguanine synthase from Azotobacter vinelandii (strain DJ / ATCC BAA-1303).